A 260-amino-acid polypeptide reads, in one-letter code: MTHQHPYHLVDQSPWPLTGAISALMMTSGLILWFHINSTILFILGTVLLVLTIINWWRDIIREATFQGFHTLSVSNGLRYGMILFITSEVCLFFAFFWAFFHSSLAPTIELGVSWPPTGITPINPFLVPLLNTAVLLSSGVTVTWAHHSILSGNRVEAIQSLTLTVFLGVYFTILQAWEYFDSPFTIADSVYGSTFFVATGFHGLHVLIGTAFLAVCLLRLYNFHFSNHHHFGFEAASWYWHFVDVVWLFLYICIYWWGS.

A run of 6 helical transmembrane segments spans residues 30–50, 81–101, 126–146, 158–178, 196–216, and 239–259; these read LILW…VLLV, GMIL…WAFF, FLVP…VTWA, AIQS…LQAW, FFVA…FLAV, and WYWH…YWWG.

The protein belongs to the cytochrome c oxidase subunit 3 family. Component of the cytochrome c oxidase (complex IV, CIV), a multisubunit enzyme composed of a catalytic core of 3 subunits and several supernumerary subunits. The complex exists as a monomer or a dimer and forms supercomplexes (SCs) in the inner mitochondrial membrane with ubiquinol-cytochrome c oxidoreductase (cytochrome b-c1 complex, complex III, CIII).

The protein localises to the mitochondrion inner membrane. The catalysed reaction is 4 Fe(II)-[cytochrome c] + O2 + 8 H(+)(in) = 4 Fe(III)-[cytochrome c] + 2 H2O + 4 H(+)(out). Functionally, component of the cytochrome c oxidase, the last enzyme in the mitochondrial electron transport chain which drives oxidative phosphorylation. The respiratory chain contains 3 multisubunit complexes succinate dehydrogenase (complex II, CII), ubiquinol-cytochrome c oxidoreductase (cytochrome b-c1 complex, complex III, CIII) and cytochrome c oxidase (complex IV, CIV), that cooperate to transfer electrons derived from NADH and succinate to molecular oxygen, creating an electrochemical gradient over the inner membrane that drives transmembrane transport and the ATP synthase. Cytochrome c oxidase is the component of the respiratory chain that catalyzes the reduction of oxygen to water. Electrons originating from reduced cytochrome c in the intermembrane space (IMS) are transferred via the dinuclear copper A center (CU(A)) of subunit 2 and heme A of subunit 1 to the active site in subunit 1, a binuclear center (BNC) formed by heme A3 and copper B (CU(B)). The BNC reduces molecular oxygen to 2 water molecules using 4 electrons from cytochrome c in the IMS and 4 protons from the mitochondrial matrix. This Pisaster ochraceus (Ochre sea star) protein is Cytochrome c oxidase subunit 3 (COIII).